The sequence spans 309 residues: Polyprenal reductase (309 aa).

The Cytoplasmic segment spans residues 1-3 (MFH). A helical transmembrane segment spans residues 4 to 24 (ILSIVNIIWLLLALCFGAAFC). Topologically, residues 25–67 (LNKFSVKLPNRVEHVFQDFIRYGKTKENIKRASWQLVFDLSKR) are lumenal. Residues 68–88 (YFYHFYVVSVMWNGLLLLFSI) traverse the membrane as a helical segment. At 89-114 (RSVVMSEAFPDWIIDVLGSLTGRSRG) the chain is on the cytoplasmic side. Residues 115-135 (AWNEIHLSTLLLQVLLWVHTL) form a helical membrane-spanning segment. Over 136–150 (RRLLECLFVSVFSDG) the chain is Lumenal. Residues 151–171 (VINVVQYAFGLSYYIILGLTV) traverse the membrane as a helical segment. Residues 172–185 (LCTNDSLPQSESVS) are Cytoplasmic-facing. A helical membrane pass occupies residues 186–206 (FFNQLTWYHVVGTLLFFWASF). At 207 to 255 (LQHQSLSLLAKMRTDSSGKVETLAHKMPCGGWFELVSCPHYLAELLIYA) the chain is on the lumenal side. A helical membrane pass occupies residues 256–276 (AMCVCCGCASLTWWMVVLYVL). Residues 277–309 (CNQALAAQLCHEYYRSKFKTYPHHRKAFIPFVL) are Cytoplasmic-facing.

It belongs to the steroid 5-alpha reductase family. Polyprenal reductase subfamily.

The protein resides in the endoplasmic reticulum membrane. The enzyme catalyses a di-trans,poly-cis-dolichal + NADP(+) = a di-trans,poly-cis-polyprenal + NADPH + H(+). It carries out the reaction a 3-oxo-5alpha-steroid + NADP(+) = a 3-oxo-Delta(4)-steroid + NADPH + H(+). The catalysed reaction is androst-4-ene-3,17-dione + NADPH + H(+) = 5alpha-androstan-3,17-dione + NADP(+). It catalyses the reaction 17beta-hydroxy-5alpha-androstan-3-one + NADP(+) = testosterone + NADPH + H(+). It participates in protein modification; protein glycosylation. Plays a key role in early steps of protein N-linked glycosylation by being involved in the conversion of polyprenol into dolichol. Acts as a polyprenal reductase that mediates the reduction of polyprenal into dolichal in a NADP-dependent mechanism. Dolichols are required for the synthesis of dolichol-linked monosaccharides and the oligosaccharide precursor used for N-glycosylation. Also able to convert testosterone (T) into 5-alpha-dihydrotestosterone (DHT). The polypeptide is Polyprenal reductase (srd5a3) (Danio rerio (Zebrafish)).